A 403-amino-acid chain; its full sequence is Na(+)/H(+) antiporter NhaH (403 aa).

12 consecutive transmembrane segments (helical) span residues 7-27 (VFIQ…IAKL), 34-54 (VALV…IEEA), 99-119 (LAFL…YFLL), 125-145 (VAFT…LSIF), 168-188 (IAVV…EMGW), 196-216 (FMFL…GYVF), 228-245 (LEVA…FIAE), 250-272 (SGVI…IGMS), 282-302 (FWDS…GLEI), 311-331 (WGYI…AVYI), 345-365 (ILIN…LSLP), and 373-393 (QVLL…GLTL).

This sequence belongs to the monovalent cation:proton antiporter 1 (CPA1) transporter (TC 2.A.36) family.

The protein resides in the cell membrane. In terms of biological role, na(+)/H(+) antiporter that extrudes sodium in exchange for external protons. Can also transport lithium. This is Na(+)/H(+) antiporter NhaH (nhaH) from Halobacillus aidingensis.